We begin with the raw amino-acid sequence, 530 residues long: T-complex protein 1 subunit gamma (530 aa).

The protein belongs to the TCP-1 chaperonin family. As to quaternary structure, heterooligomeric complex of about 850 to 900 kDa that forms two stacked rings, 12 to 16 nm in diameter.

It localises to the cytoplasm. In terms of biological role, molecular chaperone; assists the folding of proteins upon ATP hydrolysis. Known to play a role, in vitro, in the folding of actin and tubulin. In Dictyostelium discoideum (Social amoeba), this protein is T-complex protein 1 subunit gamma (cct3).